The following is a 290-amino-acid chain: Ras-like protein 1 (290 aa).

11-18 (GGGGVGKS) is a GTP binding site. The Effector region signature appears at 33–41 (YDPTIEDSY). GTP is bound by residues 58–62 (DTAGQ) and 117–120 (NKCD). Residues 176–290 (EKQQQQQQQQ…KSKNGCCVIV (115 aa)) are disordered. Low complexity-rich tracts occupy residues 178 to 216 (QQQQ…NNNN) and 246 to 283 (PNQS…SKSK). Cys286 carries S-palmitoyl cysteine lipidation. Residue Cys287 is modified to Cysteine methyl ester. Residue Cys287 is the site of S-farnesyl cysteine attachment. Positions 288 to 290 (VIV) are cleaved as a propeptide — removed in mature form.

The protein belongs to the small GTPase superfamily. Ras family.

The protein localises to the cell membrane. With respect to regulation, alternates between an inactive form bound to GDP and an active form bound to GTP. Activated by a guanine nucleotide-exchange factor (GEF) and inactivated by a GTPase-activating protein (GAP). In terms of biological role, required for the regulation of both a MAP kinase signaling pathway and a cAMP signaling pathway. The activation of these pathways contributes to the pathogenicity of the cells through the induction of the morphological transition from the yeast to the polarized filamentous form. The chain is Ras-like protein 1 (RAS1) from Candida albicans (strain SC5314 / ATCC MYA-2876) (Yeast).